A 132-amino-acid polypeptide reads, in one-letter code: Phycocyanin PC645 alpha-1 subunit (132 aa).

Residues Asp54 and Arg68 each coordinate (2R,3E)-phycocyanobilin. Residues Cys70, Gln76, Tyr77, and Lys92 each contribute to the mesobiliverdin site. 15,16-dihydrobiliverdin is bound by residues Pro123 and Ile125.

The protein belongs to the phycoerythrin family. Heterotetramer of 2 different alpha chains and 2 identical beta chains which form 2 alpha-beta heterodimers within the heterotetramer. Post-translationally, contains two phycocyanobilin chromophores, one mesobiliverdin chromophore and one 15,16-dihydrobiliverdin chromophore with binding mediated by both the alpha and beta subunits.

Its subcellular location is the plastid. The protein localises to the chloroplast thylakoid membrane. Light-harvesting photosynthetic tetrapyrrole chromophore-protein from the phycobiliprotein complex. The chain is Phycocyanin PC645 alpha-1 subunit from Chroomonas sp. (strain CCMP270).